A 268-amino-acid chain; its full sequence is 3-methyl-2-oxobutanoate hydroxymethyltransferase (268 aa).

Positions 46 and 85 each coordinate Mg(2+). 3-methyl-2-oxobutanoate is bound by residues 46–47, D85, and K115; that span reads DS. E117 is a Mg(2+) binding site. Residue E184 is the Proton acceptor of the active site.

Belongs to the PanB family. Homodecamer; pentamer of dimers. It depends on Mg(2+) as a cofactor.

Its subcellular location is the cytoplasm. The enzyme catalyses 3-methyl-2-oxobutanoate + (6R)-5,10-methylene-5,6,7,8-tetrahydrofolate + H2O = 2-dehydropantoate + (6S)-5,6,7,8-tetrahydrofolate. The protein operates within cofactor biosynthesis; (R)-pantothenate biosynthesis; (R)-pantoate from 3-methyl-2-oxobutanoate: step 1/2. Its function is as follows. Catalyzes the reversible reaction in which hydroxymethyl group from 5,10-methylenetetrahydrofolate is transferred onto alpha-ketoisovalerate to form ketopantoate. The chain is 3-methyl-2-oxobutanoate hydroxymethyltransferase from Magnetococcus marinus (strain ATCC BAA-1437 / JCM 17883 / MC-1).